The primary structure comprises 245 residues: 1-(5-phosphoribosyl)-5-[(5-phosphoribosylamino)methylideneamino] imidazole-4-carboxamide isomerase (245 aa).

D8 serves as the catalytic Proton acceptor. The active-site Proton donor is D129.

This sequence belongs to the HisA/HisF family.

Its subcellular location is the cytoplasm. It catalyses the reaction 1-(5-phospho-beta-D-ribosyl)-5-[(5-phospho-beta-D-ribosylamino)methylideneamino]imidazole-4-carboxamide = 5-[(5-phospho-1-deoxy-D-ribulos-1-ylimino)methylamino]-1-(5-phospho-beta-D-ribosyl)imidazole-4-carboxamide. It functions in the pathway amino-acid biosynthesis; L-histidine biosynthesis; L-histidine from 5-phospho-alpha-D-ribose 1-diphosphate: step 4/9. This is 1-(5-phosphoribosyl)-5-[(5-phosphoribosylamino)methylideneamino] imidazole-4-carboxamide isomerase from Rhodopseudomonas palustris (strain BisB18).